The primary structure comprises 347 residues: N6-Methyl-AMP deaminase-L (347 aa).

Zn(2+)-binding residues include His19 and His21. N(6)-methyl-AMP-binding positions include His21, Asn23, His69, 101–104 (STPR), Asp142, and Gly175. Zn(2+) is bound at residue His202. N(6)-methyl-AMP contacts are provided by Glu205, Asp283, and Asp284. Catalysis depends on Glu205, which acts as the Proton donor. Asp283 serves as a coordination point for Zn(2+).

It belongs to the metallo-dependent hydrolases superfamily. Adenosine and AMP deaminases family. Monomer. Zn(2+) serves as cofactor.

The enzyme catalyses N(6)-methyl-AMP + H2O + H(+) = IMP + methylamine. In terms of biological role, catalyzes the hydrolysis of the free cytosolic methylated adenosine nucleotide N(6)-methyl-AMP (N6-mAMP) to produce inositol monophosphate (IMP) and methylamine. Is required for the catabolism of cytosolic N6-mAMP, which is derived from the degradation of mRNA containing N6-methylated adenine (m6A). This Xenopus laevis (African clawed frog) protein is N6-Methyl-AMP deaminase-L (mapda.L).